The sequence spans 116 residues: MTNKIIQQLEAEQMSKEIPAFAPGDTVIVQVKVKEGERQRLQAFEGVVIGKRNRGLNSAFTVRKISSGVGVERTFQTYSPLVDSITVKRRGDVRKAKLYYLRDLSGKAARIKEKLS.

The protein belongs to the bacterial ribosomal protein bL19 family.

Functionally, this protein is located at the 30S-50S ribosomal subunit interface and may play a role in the structure and function of the aminoacyl-tRNA binding site. The chain is Large ribosomal subunit protein bL19 from Azotobacter vinelandii (strain DJ / ATCC BAA-1303).